A 420-amino-acid chain; its full sequence is Glutamyl-tRNA reductase (420 aa).

Residues 49 to 52 (TCNR), Ser110, 115 to 117 (EHQ), and Gln121 each bind substrate. Cys50 (nucleophile) is an active-site residue. Residue 190-195 (GSGTIN) coordinates NADP(+).

It belongs to the glutamyl-tRNA reductase family. Homodimer.

The catalysed reaction is (S)-4-amino-5-oxopentanoate + tRNA(Glu) + NADP(+) = L-glutamyl-tRNA(Glu) + NADPH + H(+). It participates in porphyrin-containing compound metabolism; protoporphyrin-IX biosynthesis; 5-aminolevulinate from L-glutamyl-tRNA(Glu): step 1/2. Its function is as follows. Catalyzes the NADPH-dependent reduction of glutamyl-tRNA(Glu) to glutamate 1-semialdehyde (GSA). The protein is Glutamyl-tRNA reductase of Wigglesworthia glossinidia brevipalpis.